We begin with the raw amino-acid sequence, 456 residues long: Bifunctional protein GlmU (456 aa).

A pyrophosphorylase region spans residues methionine 1–arginine 229. UDP-N-acetyl-alpha-D-glucosamine is bound by residues leucine 11–glycine 14, lysine 25, glutamine 76, glycine 81–threonine 82, tyrosine 103–aspartate 105, glycine 140, glutamate 154, asparagine 169, and asparagine 227. A Mg(2+)-binding site is contributed by aspartate 105. A Mg(2+)-binding site is contributed by asparagine 227. Positions leucine 230 to alanine 250 are linker. The interval glycine 251–lysine 456 is N-acetyltransferase. Arginine 333 and lysine 351 together coordinate UDP-N-acetyl-alpha-D-glucosamine. Catalysis depends on histidine 363, which acts as the Proton acceptor. The UDP-N-acetyl-alpha-D-glucosamine site is built by tyrosine 366 and asparagine 377. Acetyl-CoA contacts are provided by residues alanine 380, asparagine 386 to tyrosine 387, serine 405, alanine 423, and arginine 440.

It in the N-terminal section; belongs to the N-acetylglucosamine-1-phosphate uridyltransferase family. The protein in the C-terminal section; belongs to the transferase hexapeptide repeat family. As to quaternary structure, homotrimer. It depends on Mg(2+) as a cofactor.

The protein resides in the cytoplasm. It carries out the reaction alpha-D-glucosamine 1-phosphate + acetyl-CoA = N-acetyl-alpha-D-glucosamine 1-phosphate + CoA + H(+). It catalyses the reaction N-acetyl-alpha-D-glucosamine 1-phosphate + UTP + H(+) = UDP-N-acetyl-alpha-D-glucosamine + diphosphate. It participates in nucleotide-sugar biosynthesis; UDP-N-acetyl-alpha-D-glucosamine biosynthesis; N-acetyl-alpha-D-glucosamine 1-phosphate from alpha-D-glucosamine 6-phosphate (route II): step 2/2. Its pathway is nucleotide-sugar biosynthesis; UDP-N-acetyl-alpha-D-glucosamine biosynthesis; UDP-N-acetyl-alpha-D-glucosamine from N-acetyl-alpha-D-glucosamine 1-phosphate: step 1/1. The protein operates within bacterial outer membrane biogenesis; LPS lipid A biosynthesis. Catalyzes the last two sequential reactions in the de novo biosynthetic pathway for UDP-N-acetylglucosamine (UDP-GlcNAc). The C-terminal domain catalyzes the transfer of acetyl group from acetyl coenzyme A to glucosamine-1-phosphate (GlcN-1-P) to produce N-acetylglucosamine-1-phosphate (GlcNAc-1-P), which is converted into UDP-GlcNAc by the transfer of uridine 5-monophosphate (from uridine 5-triphosphate), a reaction catalyzed by the N-terminal domain. The polypeptide is Bifunctional protein GlmU (Cronobacter sakazakii (strain ATCC BAA-894) (Enterobacter sakazakii)).